Here is a 98-residue protein sequence, read N- to C-terminus: Integration host factor subunit alpha (98 aa).

This sequence belongs to the bacterial histone-like protein family. Heterodimer of an alpha and a beta chain.

Its function is as follows. This protein is one of the two subunits of integration host factor, a specific DNA-binding protein that functions in genetic recombination as well as in transcriptional and translational control. This is Integration host factor subunit alpha from Actinobacillus pleuropneumoniae serotype 5b (strain L20).